Here is a 298-residue protein sequence, read N- to C-terminus: Glycine--tRNA ligase alpha subunit (298 aa).

This sequence belongs to the class-II aminoacyl-tRNA synthetase family. As to quaternary structure, tetramer of two alpha and two beta subunits.

The protein localises to the cytoplasm. It catalyses the reaction tRNA(Gly) + glycine + ATP = glycyl-tRNA(Gly) + AMP + diphosphate. The chain is Glycine--tRNA ligase alpha subunit (glyQ) from Helicobacter pylori (strain J99 / ATCC 700824) (Campylobacter pylori J99).